The chain runs to 504 residues: Paired zinc finger protein 1 (504 aa).

C2H2-type zinc fingers lie at residues 12 to 35 (LLCGICGKYFSDDESLREHRRQRH) and 39 to 62 (HMCLLCNRRIPENETLREHMKNKH). The segment at 68-91 (FICVCCNWSFGTEIYLKCHEECMK) adopts a C2H2-type 3; degenerate zinc-finger fold. Disordered stretches follow at residues 115-136 (ALNTDPQNGSDDVPHSSPSPVP) and 154-173 (IESADRSSASTSTPRTLVSG). Residues 159–172 (RSSASTSTPRTLVS) are compositionally biased toward polar residues. C2H2-type zinc fingers lie at residues 179-202 (IPCGFCGKDFFHEGSLREHRRRFH) and 206-229 (HTCLLCNRQIPENETVRDHMKSQH). A C2H2-type 6; degenerate zinc finger spans residues 235-258 (YNCLCCNWTFLNQVHLISHKTCLK). Residues 309-332 (LSCKSCGKFFYSERSLSKHHRQIH) form a C2H2-type 7 zinc finger. The segment at 365 to 389 (FNCRCCNWSFATRRCLMSHVECLKK) adopts a C2H2-type 8; degenerate zinc-finger fold.

As to expression, expressed in proximal gonad.

Functionally, possible transcriptional regulator. Involved in promoting segregation of chromosomes during meiosis, perhaps acting downstream of the let-60 RAS / mpk-1 MAPK signaling pathway. The polypeptide is Paired zinc finger protein 1 (Caenorhabditis elegans).